Here is a 137-residue protein sequence, read N- to C-terminus: uncharacterized protein (137 aa).

3 helical membrane passes run 5-25 (ELLW…VLVI), 79-99 (IAAI…WGYY), and 109-129 (FALG…SILW).

This sequence belongs to the MAPEG family.

Its subcellular location is the cell membrane. This is an uncharacterized protein from Synechocystis sp. (strain ATCC 27184 / PCC 6803 / Kazusa).